Consider the following 969-residue polypeptide: RNA polymerase-associated protein RapA (969 aa).

One can recognise a Helicase ATP-binding domain in the interval Glu-164–Asp-334. Asp-177–Thr-184 contacts ATP. Positions Asp-280–His-283 match the DEAH box motif. Residues Arg-492–Arg-686 enclose the Helicase C-terminal domain.

Belongs to the SNF2/RAD54 helicase family. RapA subfamily. Interacts with the RNAP. Has a higher affinity for the core RNAP than for the holoenzyme. Its ATPase activity is stimulated by binding to RNAP.

Functionally, transcription regulator that activates transcription by stimulating RNA polymerase (RNAP) recycling in case of stress conditions such as supercoiled DNA or high salt concentrations. Probably acts by releasing the RNAP, when it is trapped or immobilized on tightly supercoiled DNA. Does not activate transcription on linear DNA. Probably not involved in DNA repair. The chain is RNA polymerase-associated protein RapA from Vibrio parahaemolyticus serotype O3:K6 (strain RIMD 2210633).